Consider the following 195-residue polypeptide: Transcriptional regulator GfcR (195 aa).

Belongs to the purine/pyrimidine phosphoribosyltransferase family. GfcR subfamily.

This Picrophilus torridus (strain ATCC 700027 / DSM 9790 / JCM 10055 / NBRC 100828 / KAW 2/3) protein is Transcriptional regulator GfcR.